Here is a 110-residue protein sequence, read N- to C-terminus: V-type proton ATPase subunit G1 (110 aa).

Methionine 1 carries the post-translational modification N-acetylmethionine. The disordered stretch occupies residues 60-80 (KLEETSGDSGANVKRLEQETD).

This sequence belongs to the V-ATPase G subunit family. In terms of assembly, V-ATPase is a heteromultimeric enzyme composed of a peripheral catalytic V1 complex (components A to H) attached to an integral membrane V0 proton pore complex (components: a, c, c'', d and e).

Its subcellular location is the cell membrane. The protein localises to the vacuole membrane. Its function is as follows. Catalytic subunit of the peripheral V1 complex of vacuolar ATPase (V-ATPase). V-ATPase is responsible for acidifying a variety of intracellular compartments in eukaryotic cells. The protein is V-type proton ATPase subunit G1 (VHA-G1) of Arabidopsis thaliana (Mouse-ear cress).